The primary structure comprises 570 residues: Hydroxylamine reductase (570 aa).

[4Fe-4S] cluster is bound by residues cysteine 5, cysteine 8, cysteine 17, and cysteine 23. Positions 266, 290, 334, 425, 453, 478, 513, and 515 each coordinate hybrid [4Fe-2O-2S] cluster. At cysteine 425 the chain carries Cysteine persulfide.

It belongs to the HCP family. It depends on [4Fe-4S] cluster as a cofactor. Hybrid [4Fe-2O-2S] cluster is required as a cofactor.

It is found in the cytoplasm. The enzyme catalyses A + NH4(+) + H2O = hydroxylamine + AH2 + H(+). Its function is as follows. Catalyzes the reduction of hydroxylamine to form NH(3) and H(2)O. The protein is Hydroxylamine reductase of Clostridium tetani (strain Massachusetts / E88).